Reading from the N-terminus, the 953-residue chain is Coatomer subunit beta (953 aa).

Thr-2 is subject to N-acetylthreonine. HEAT repeat units follow at residues 96–131 (HEMILVCDAYRKDLQHPNEFIRGSTLRFLCKLKEAE), 132–168 (LLEPLMPAIRACLEHRHSYVRRNAVLAIYTIYRNFEH), 240–276 (SERARFIRCIYNLLQSSSPAVKYEAAGTLVTLSSAPT), 277–314 (AIKAAAQCYIDLIIKESDNNVKLIVLDRLIELKEHPAH), 316–353 (RVLQDLVMDILRVLSTPDLEVRKKTLQLALDLVSSRNV), and 396–433 (DMAANVIPVLMEFLSDSNEAAAADVLEFVREAIQRFDN). At Lys-494 the chain carries N6-acetyllysine.

As to quaternary structure, oligomeric complex that consists of at least the alpha, beta, beta', gamma, delta, epsilon and zeta subunits. Interacts with CAPN8 and PRKCE. Interacts with SCYL1. Interacts with COPG1. Interacts with ARF1 (myristoylated); this interaction is required for binding of COPB1 to Golgi membranes. Interacts (via trunk domain) with ARF1 (via switch I region); the interaction is direct. Interacts with KCNK2 (via N-terminus); this interaction increases the channel-mediated whole cell currents and promotes plasma membrane expression of KCNK2. Interacts with STX17. Interacts with TMEM115. Interacts with TMEM41B. In terms of tissue distribution, high expression in the lung, kidney, skeletal muscle and small intestine, and lower level of expression in heart, liver, spleen, stomach and fat.

It localises to the cytoplasm. The protein localises to the golgi apparatus membrane. Its subcellular location is the cytoplasmic vesicle. It is found in the COPI-coated vesicle membrane. The protein resides in the cell membrane. It localises to the endoplasmic reticulum-Golgi intermediate compartment. Its function is as follows. The coatomer is a cytosolic protein complex that binds to dilysine motifs and reversibly associates with Golgi non-clathrin-coated vesicles, which further mediate biosynthetic protein transport from the ER, via the Golgi up to the trans Golgi network. Coatomer complex is required for budding from Golgi membranes, and is essential for the retrograde Golgi-to-ER transport of dilysine-tagged proteins. In mammals, the coatomer can only be recruited by membranes associated to ADP-ribosylation factors (ARFs), which are small GTP-binding proteins; the complex also influences the Golgi structural integrity, as well as the processing, activity, and endocytic recycling of LDL receptors. Plays a functional role in facilitating the transport of kappa-type opioid receptor mRNAs into axons and enhances translation of these proteins. Required for limiting lipid storage in lipid droplets. Involved in lipid homeostasis by regulating the presence of perilipin family members PLIN2 and PLIN3 at the lipid droplet surface and promoting the association of adipocyte surface triglyceride lipase (PNPLA2) with the lipid droplet to mediate lipolysis. Involved in the Golgi disassembly and reassembly processes during cell cycle. Involved in autophagy by playing a role in early endosome function. Plays a role in organellar compartmentalization of secretory compartments including endoplasmic reticulum (ER)-Golgi intermediate compartment (ERGIC), Golgi, trans-Golgi network (TGN) and recycling endosomes, and in biosynthetic transport of CAV1. This is Coatomer subunit beta from Sus scrofa (Pig).